Reading from the N-terminus, the 2240-residue chain is Death-inducer obliterator 1 (2240 aa).

Position 1 is an N-acetylmethionine (M1). Basic and acidic residues predominate over residues 1-25; sequence MDDKGDPSNEEAPKAIKPTSKEFRK. The disordered stretch occupies residues 1–259; that stretch reads MDDKGDPSNE…EPGDLGRPKP (259 aa). Phosphoserine is present on residues S60 and S114. Over residues 111 to 130 the composition is skewed to polar residues; the sequence is SEGSVESASETRSGPQSAST. Residues 132–146 show a composition bias toward basic and acidic residues; that stretch reads VKERPASSEKVKGGD. Residues 147–156 show a composition bias toward acidic residues; it reads DHDDTSDSDS. The residue at position 151 (T151) is a Phosphothreonine. Phosphoserine is present on residues S152 and S154. 2 short sequence motifs (nuclear localization signal) span residues 165-173 and 185-193; these read QNRLRRKRE and QSRLRKKRR. Basic and acidic residues predominate over residues 172 to 181; sequence REQEPTERPL. Positions 230–246 are enriched in basic and acidic residues; it reads GKDDRESKLEGKAAQDI. A Glycyl lysine isopeptide (Lys-Gly) (interchain with G-Cter in SUMO2) cross-link involves residue K247. The PHD-type zinc finger occupies 268 to 322; that stretch reads ALYCICRQPHNNRFMICCDRCEEWFHGDCVGISEARGRLLERNGEDYICPNCTIL. 9 disordered regions span residues 431 to 456, 501 to 567, 584 to 618, 773 to 826, 860 to 947, 1013 to 1045, 1206 to 1427, 1453 to 1472, and 1517 to 2240; these read SGKE…PKCG, STPS…RNLV, KKPP…GPAP, RPAR…EKST, VPSA…EDLS, LAKP…PEGD, GELD…VAYD, RRNS…TPSL, and SDAL…ASQA. Positions 433-451 are enriched in basic and acidic residues; that stretch reads KEQKPKPKEKMKMKPEKPS. A compositionally biased stretch (polar residues) spans 501 to 510; that stretch reads STPSWASDHN. The residue at position 523 (S523) is a Phosphoserine. Residues 530 to 541 show a composition bias toward basic and acidic residues; it reads STKEDRRSEEKA. 2 stretches are compositionally biased toward low complexity: residues 542 to 551 and 604 to 618; these read AAMAASKKTA and PSSG…GPAP. The TFIIS central domain occupies 670–790; the sequence is IRQNIRRSLK…SRTKLHNESK (121 aa). The segment covering 773–791 has biased composition (basic and acidic residues); the sequence is RPARSVMESRTKLHNESKK. Residues 800–815 are compositionally biased toward acidic residues; sequence PDLEDSPPVSDSEEQQ. Phosphoserine occurs at positions 805 and 809. The span at 878–890 shows a compositional bias: basic and acidic residues; the sequence is VKKEDLKSKHDSS. Residue K879 forms a Glycyl lysine isopeptide (Lys-Gly) (interchain with G-Cter in SUMO2) linkage. Phosphoserine occurs at positions 889 and 898. The span at 930 to 941 shows a compositional bias: pro residues; the sequence is PGPPGDGHPEPS. Phosphoserine occurs at positions 1019, 1030, and 1040. Residues 1207 to 1220 show a composition bias toward basic and acidic residues; the sequence is ELDKMDEKRTRLQP. Position 1244 is a phosphotyrosine (Y1244). The residue at position 1256 (T1256) is a Phosphothreonine. Over residues 1258–1271 the composition is skewed to pro residues; that stretch reads PGSPPPPPPLPEPP. Phosphoserine occurs at positions 1260 and 1312. Residues 1276 to 1313 are compositionally biased toward low complexity; that stretch reads LSSLKPAAPSPATAATTAAAASTAASSTASSASKTASP. Residues 1376–1392 are compositionally biased toward acidic residues; the sequence is LEEEEDDRPYDPEEEYD. Basic and acidic residues predominate over residues 1393–1424; the sequence is PERAFDTQLVERGRRHEVERAPEAAAAEREEV. The residue at position 1456 (S1456) is a Phosphoserine. T1469 is modified (phosphothreonine). 2 positions are modified to phosphoserine: S1522 and S1714. Pro residues predominate over residues 1771–1782; the sequence is FPGPRGPAPPFP. An Omega-N-methylarginine modification is found at R1835. A compositionally biased stretch (basic and acidic residues) spans 1842–1856; sequence FEERKDPHGEKREFQ. Asymmetric dimethylarginine is present on residues R1893, R1894, R1977, R1982, R1993, R2008, and R2024. Low complexity predominate over residues 2044 to 2059; the sequence is AGPPSALSSSAPGQGP. Basic and acidic residues-rich tracts occupy residues 2069-2101 and 2109-2230; these read DFRE…KPLE and ASED…EASR.

As to quaternary structure, interacts specifically (via PHD-type zinc finger) with histone H3 that is trimethylated at 'Lys-4' (H3K4me3), histone phosphorylation at 'Thr-3' or 'Thr-6' disrupts this binding and promotes translocation of DIDO1 from chromatin to the mitotic spindle during mitosis. In terms of tissue distribution, ubiquitous.

It is found in the cytoplasm. The protein localises to the nucleus. It localises to the cytoskeleton. Its subcellular location is the spindle. Putative transcription factor, weakly pro-apoptotic when overexpressed. Tumor suppressor. Required for early embryonic stem cell development. In terms of biological role, displaces isoform 4 at the onset of differentiation, required for repression of stemness genes. The chain is Death-inducer obliterator 1 (DIDO1) from Homo sapiens (Human).